Consider the following 147-residue polypeptide: Hemoglobin subunit epsilon (147 aa).

Residues 3-147 enclose the Globin domain; it reads HWSAEEKQLI…VAHALPRKYH (145 aa). Heme b-binding residues include H64 and H93.

It belongs to the globin family. Heterotetramer of two epsilon chains and two alpha chains. In terms of tissue distribution, red blood cells.

Functionally, beta-type chain found in early embryos. The sequence is that of Hemoglobin subunit epsilon (HBE) from Cairina moschata (Muscovy duck).